Here is a 356-residue protein sequence, read N- to C-terminus: UDP-3-O-acylglucosamine N-acyltransferase (356 aa).

H242 acts as the Proton acceptor in catalysis.

This sequence belongs to the transferase hexapeptide repeat family. LpxD subfamily. As to quaternary structure, homotrimer.

The enzyme catalyses a UDP-3-O-[(3R)-3-hydroxyacyl]-alpha-D-glucosamine + a (3R)-hydroxyacyl-[ACP] = a UDP-2-N,3-O-bis[(3R)-3-hydroxyacyl]-alpha-D-glucosamine + holo-[ACP] + H(+). It participates in bacterial outer membrane biogenesis; LPS lipid A biosynthesis. Functionally, catalyzes the N-acylation of UDP-3-O-acylglucosamine using 3-hydroxyacyl-ACP as the acyl donor. Is involved in the biosynthesis of lipid A, a phosphorylated glycolipid that anchors the lipopolysaccharide to the outer membrane of the cell. The polypeptide is UDP-3-O-acylglucosamine N-acyltransferase (Acinetobacter baylyi (strain ATCC 33305 / BD413 / ADP1)).